Consider the following 106-residue polypeptide: Large ribosomal subunit protein eL42 (106 aa).

Belongs to the eukaryotic ribosomal protein eL42 family.

This Yarrowia lipolytica (strain CLIB 122 / E 150) (Yeast) protein is Large ribosomal subunit protein eL42 (RPL44).